An 88-amino-acid polypeptide reads, in one-letter code: Small ribosomal subunit protein uS19 (88 aa).

This sequence belongs to the universal ribosomal protein uS19 family.

Its function is as follows. Protein S19 forms a complex with S13 that binds strongly to the 16S ribosomal RNA. This is Small ribosomal subunit protein uS19 from Chlamydia abortus (strain DSM 27085 / S26/3) (Chlamydophila abortus).